Here is a 315-residue protein sequence, read N- to C-terminus: Ribose-phosphate pyrophosphokinase (315 aa).

ATP contacts are provided by residues 37–39 (DGE) and 96–97 (RQ). Mg(2+)-binding residues include His-131 and Asp-171. The active site involves Lys-195. D-ribose 5-phosphate is bound by residues Arg-197, Asp-221, and 225 to 229 (DTGGT).

Belongs to the ribose-phosphate pyrophosphokinase family. Class I subfamily. As to quaternary structure, homohexamer. It depends on Mg(2+) as a cofactor.

It is found in the cytoplasm. It catalyses the reaction D-ribose 5-phosphate + ATP = 5-phospho-alpha-D-ribose 1-diphosphate + AMP + H(+). It functions in the pathway metabolic intermediate biosynthesis; 5-phospho-alpha-D-ribose 1-diphosphate biosynthesis; 5-phospho-alpha-D-ribose 1-diphosphate from D-ribose 5-phosphate (route I): step 1/1. Its function is as follows. Involved in the biosynthesis of the central metabolite phospho-alpha-D-ribosyl-1-pyrophosphate (PRPP) via the transfer of pyrophosphoryl group from ATP to 1-hydroxyl of ribose-5-phosphate (Rib-5-P). The polypeptide is Ribose-phosphate pyrophosphokinase (Haemophilus influenzae (strain ATCC 51907 / DSM 11121 / KW20 / Rd)).